The chain runs to 203 residues: MNLQNKILKGTTTVGIKVKDGVVLAADRRASAGYYVAHKYVRKVLYVTDNIGITTAGSVADLQFIYEALKYIYHRNSITGEGPITVKGIATWLANVLSSSKYFPYLVQILIGGVDDQPRLYNLDYLGDITEEEYTATGSGSPEALGVLEDNYKPEMSLDEAAELAKRAIFSSIKRDSFTGTGVIVTKITKNGHEEKEYYITKR.

Residues 1–10 (MNLQNKILKG) constitute a propeptide, removed in mature form; by autocatalysis. Thr11 (nucleophile) is an active-site residue.

It belongs to the peptidase T1B family. As to quaternary structure, the 20S proteasome core is composed of 14 alpha and 14 beta subunits that assemble into four stacked heptameric rings, resulting in a barrel-shaped structure. The two inner rings, each composed of seven catalytic beta subunits, are sandwiched by two outer rings, each composed of seven alpha subunits. The catalytic chamber with the active sites is on the inside of the barrel. Has a gated structure, the ends of the cylinder being occluded by the N-termini of the alpha-subunits. Is capped at one or both ends by the proteasome regulatory ATPase, PAN.

It is found in the cytoplasm. The catalysed reaction is Cleavage of peptide bonds with very broad specificity.. The formation of the proteasomal ATPase PAN-20S proteasome complex, via the docking of the C-termini of PAN into the intersubunit pockets in the alpha-rings, triggers opening of the gate for substrate entry. Interconversion between the open-gate and close-gate conformations leads to a dynamic regulation of the 20S proteasome proteolysis activity. Functionally, component of the proteasome core, a large protease complex with broad specificity involved in protein degradation. This Sulfolobus acidocaldarius (strain ATCC 33909 / DSM 639 / JCM 8929 / NBRC 15157 / NCIMB 11770) protein is Proteasome subunit beta 2.